Consider the following 133-residue polypeptide: MAKLQAITLSGIGKNGDVTLNLNPRGVNPTNGVAALSEAGAVPALEKRVTISVSQPSRNRKNYKVQVKIQNPTSCTASGTCDPSVTRSAYADVTFSFTQYSTDEERALVRTELKALLADPMLIDAIDNLNPAY.

Belongs to the Leviviricetes capsid protein family. As to quaternary structure, homodimer. The capsid protein dimer binds to the viral RNA via an operator hairpin, but also many other RNA sequences in the viral genome.

Its subcellular location is the virion. Capsid protein self-assembles to form an icosahedral capsid with a T=3 symmetry, about 26 nm in diameter, and consisting of 89 capsid proteins dimers (178 capsid proteins). Involved in viral genome encapsidation through the interaction between a capsid protein dimer and the multiple packaging signals present in the RNA genome. Binding of the capsid proteins to the viral RNA induces a conformational change required for efficient T=3 shell formation. The capsid also contains 1 copy of the A2 maturation protein. Its function is as follows. Acts as a translational repressor of viral replicase synthesis late in infection. This latter function is the result of capsid protein interaction with an RNA hairpin which contains the replicase ribosome-binding site. In Escherichia coli, this protein is Capsid protein.